Consider the following 104-residue polypeptide: Endogenous retrovirus group K member 21 Rec protein (104 aa).

A disordered region spans residues 1-48 (MHPSEMQRKAPPRRRRHRNRAPLTHKMNKMVTSEQMKLPSTKKAEPPT). The span at 10-20 (APPRRRRHRNR) shows a compositional bias: basic residues. The Nuclear localization signal motif lies at 13–20 (RRRRHRNR). The Nuclear export signal motif lies at 49 to 58 (WAQLKKLTQL).

As to quaternary structure, forms homodimers, homotrimers, and homotetramers via a C-terminal domain. Associates with XPO1 and with ZNF145.

The protein localises to the cytoplasm. Its subcellular location is the nucleus. The protein resides in the nucleolus. In terms of biological role, retroviral replication requires the nuclear export and translation of unspliced, singly-spliced and multiply-spliced derivatives of the initial genomic transcript. Rec interacts with a highly structured RNA element (RcRE) present in the viral 3'LTR and recruits the cellular nuclear export machinery. This permits export to the cytoplasm of unspliced genomic or incompletely spliced subgenomic viral transcripts. In Homo sapiens (Human), this protein is Endogenous retrovirus group K member 21 Rec protein (ERVK-21).